Consider the following 911-residue polypeptide: Isoleucine--tRNA ligase (911 aa).

The 'HIGH' region motif lies at 57–67 (PYANGDIHMGH). An L-isoleucyl-5'-AMP-binding site is contributed by Glu-551. The 'KMSKS' region signature appears at 592-596 (KMSKS). Lys-595 is a binding site for ATP. Zn(2+)-binding residues include Cys-881, Cys-884, Cys-901, and Cys-904.

This sequence belongs to the class-I aminoacyl-tRNA synthetase family. IleS type 1 subfamily. As to quaternary structure, monomer. Zn(2+) serves as cofactor.

Its subcellular location is the cytoplasm. The enzyme catalyses tRNA(Ile) + L-isoleucine + ATP = L-isoleucyl-tRNA(Ile) + AMP + diphosphate. Catalyzes the attachment of isoleucine to tRNA(Ile). As IleRS can inadvertently accommodate and process structurally similar amino acids such as valine, to avoid such errors it has two additional distinct tRNA(Ile)-dependent editing activities. One activity is designated as 'pretransfer' editing and involves the hydrolysis of activated Val-AMP. The other activity is designated 'posttransfer' editing and involves deacylation of mischarged Val-tRNA(Ile). The sequence is that of Isoleucine--tRNA ligase from Exiguobacterium sibiricum (strain DSM 17290 / CCUG 55495 / CIP 109462 / JCM 13490 / 255-15).